The primary structure comprises 212 residues: 3-oxo-tetronate 4-phosphate decarboxylase (212 aa).

The active-site Proton acceptor is E79. Zn(2+)-binding residues include E79, H98, and H100. Residue Y125 is the Proton donor of the active site. H165 serves as a coordination point for Zn(2+).

It belongs to the aldolase class II family. AraD/FucA subfamily. Zn(2+) is required as a cofactor.

The enzyme catalyses 3-dehydro-4-O-phospho-D-erythronate + H(+) = dihydroxyacetone phosphate + CO2. The catalysed reaction is 3-dehydro-4-O-phospho-L-erythronate + H(+) = dihydroxyacetone phosphate + CO2. Catalyzes the decarboxylation of 3-oxo-tetronate 4-phosphate to dihydroxyacetone phosphate (DHAP) and CO(2). In Escherichia coli (strain K12), this protein is 3-oxo-tetronate 4-phosphate decarboxylase.